Consider the following 88-residue polypeptide: MRMGRVHYPTYRIVAVDSRVKRDGKYIALIGHLNPALKENKCKIDEAVALEWLNKGAKPTDTVRSLFSQTGLWKKFVESKKKPVAKSK.

The protein belongs to the bacterial ribosomal protein bS16 family.

In Mycoplasma pneumoniae (strain ATCC 29342 / M129 / Subtype 1) (Mycoplasmoides pneumoniae), this protein is Small ribosomal subunit protein bS16.